The chain runs to 805 residues: Arginine/serine-rich protein PNISR (805 aa).

The span at 74–88 shows a compositional bias: polar residues; sequence PNNHGNFQGDSNFNR. Disordered stretches follow at residues 74-331 and 382-805; these read PNNH…EEKE and LTGL…SRSR. Pro residues-rich tracts occupy residues 100–115 and 183–195; these read PPHP…PTPG and YWQP…PAPP. Basic and acidic residues predominate over residues 197 to 210; sequence NRRERPSSFRDRQR. Residues serine 204 and serine 211 each carry the phosphoserine modification. Lysine 218 participates in a covalent cross-link: Glycyl lysine isopeptide (Lys-Gly) (interchain with G-Cter in SUMO2). The stretch at 237–276 forms a coiled coil; it reads REGLEKMEREKQKKLEKERMEQQRSQLSKKEKKATEDAEG. Positions 238-258 are enriched in basic and acidic residues; the sequence is EGLEKMEREKQKKLEKERMEQ. Residues serine 290, serine 304, serine 313, and serine 321 each carry the phosphoserine modification. Over residues 290–299 the composition is skewed to acidic residues; the sequence is SDEEEEDTEN. Residues 384–393 are compositionally biased toward gly residues; the sequence is GLGGLGGYGS. The span at 421–463 shows a compositional bias: basic and acidic residues; that stretch reads QKQEAFWRKEKEQQLLHDKQMEEEKQQTERVTKEMNEFIHKEQ. Positions 429–461 form a coiled coil; sequence KEKEQQLLHDKQMEEEKQQTERVTKEMNEFIHK. Phosphoserine is present on residues serine 465 and serine 467. Composition is skewed to basic and acidic residues over residues 470-486 and 494-506; these read EARE…KRTP and EPKK…EKQG. Threonine 485 bears the Phosphothreonine mark. Lysine 496 participates in a covalent cross-link: Glycyl lysine isopeptide (Lys-Gly) (interchain with G-Cter in SUMO2). Over residues 508–550 the composition is skewed to low complexity; that stretch reads SRSGSSSSGSSSSNSRTSSTSSTVSSSSYSSSSGSSRTSSRSS. 3 stretches are compositionally biased toward basic residues: residues 551–579, 587–598, and 607–639; these read SPKR…YSRR, ARVKIRDRRRSN, and RRNR…SRDR. Over residues 659-721 the composition is skewed to basic and acidic residues; sequence EAKEQERKKE…KRKRESERTF (63 aa). Positions 673–703 form a coiled coil; that stretch reads IDKDRKKKDKEREREQDKRKEKQKREEKDFK. A Glycyl lysine isopeptide (Lys-Gly) (interchain with G-Cter in SUMO2) cross-link involves residue lysine 703. At serine 726 the chain carries Phosphoserine. The span at 732–753 shows a compositional bias: basic and acidic residues; sequence IRHDSRQDSKKSTTKDSKKHSG. Positions 754 to 767 are enriched in low complexity; sequence SDSSGRSSSESPGS. Basic residues-rich tracts occupy residues 771-781 and 789-805; these read KKAKKPKHSRS and RSGK…SRSR.

This sequence belongs to the splicing factor SR family. As to quaternary structure, interacts with PNN. As to expression, expressed in heart, skeletal muscle, thymus, spleen, kidney, liver, placenta and leukocytes.

The protein localises to the nucleus speckle. The polypeptide is Arginine/serine-rich protein PNISR (PNISR) (Homo sapiens (Human)).